An 88-amino-acid chain; its full sequence is Phosphocarrier protein HPr (88 aa).

Residues 2–88 enclose the HPr domain; that stretch reads AQKTFKVTAD…ETMKSEGLGE (87 aa). Residue Ser-12 is modified to Phosphoserine. The active-site Pros-phosphohistidine intermediate; alternate is the His-15. His-15 is modified (tele-phosphohistidine; alternate). Residue Ser-46 is modified to Phosphoserine; by HPrK/P.

It belongs to the HPr family. In terms of processing, phosphorylated during sporulation.

It localises to the cytoplasm. Its activity is regulated as follows. Phosphorylation on Ser-46 inhibits the phosphoryl transfer from enzyme I to HPr. In terms of biological role, general (non sugar-specific) component of the phosphoenolpyruvate-dependent sugar phosphotransferase system (sugar PTS). This major carbohydrate active-transport system catalyzes the phosphorylation of incoming sugar substrates concomitantly with their translocation across the cell membrane. The phosphoryl group from phosphoenolpyruvate (PEP) is transferred to the phosphoryl carrier protein HPr by enzyme I. Phospho-HPr then transfers it to the PTS EIIA domain. Functionally, P-Ser-HPr interacts with the catabolite control protein A (CcpA), forming a complex that binds to DNA at the catabolite response elements cre, operator sites preceding a large number of catabolite-regulated genes. Thus, P-Ser-HPr is a corepressor in carbon catabolite repression (CCR), a mechanism that allows bacteria to coordinate and optimize the utilization of available carbon sources. P-Ser-HPr also plays a role in inducer exclusion, in which it probably interacts with several non-PTS permeases and inhibits their transport activity. The chain is Phosphocarrier protein HPr (ptsH) from Bacillus subtilis (strain 168).